Reading from the N-terminus, the 346-residue chain is Probable galacturonosyltransferase-like 6 (346 aa).

A helical; Signal-anchor for type II membrane protein transmembrane segment spans residues 1–21 (MLWITRFAGLFSAAMAVIVLS). Topologically, residues 22–346 (PSLQSFPPAA…TPYDLYRHSH (325 aa)) are lumenal. Asn-203 is a glycosylation site (N-linked (GlcNAc...) asparagine).

Belongs to the glycosyltransferase 8 family.

Its subcellular location is the golgi apparatus membrane. The protein operates within glycan metabolism; pectin biosynthesis. Its function is as follows. May be involved in pectin and/or xylans biosynthesis in cell walls. This chain is Probable galacturonosyltransferase-like 6 (GATL6), found in Arabidopsis thaliana (Mouse-ear cress).